The following is a 448-amino-acid chain: Exodeoxyribonuclease 7 large subunit (448 aa).

Belongs to the XseA family. Heterooligomer composed of large and small subunits.

It is found in the cytoplasm. The enzyme catalyses Exonucleolytic cleavage in either 5'- to 3'- or 3'- to 5'-direction to yield nucleoside 5'-phosphates.. Functionally, bidirectionally degrades single-stranded DNA into large acid-insoluble oligonucleotides, which are then degraded further into small acid-soluble oligonucleotides. In Shewanella sp. (strain ANA-3), this protein is Exodeoxyribonuclease 7 large subunit.